The primary structure comprises 565 residues: Formate--tetrahydrofolate ligase (565 aa).

An ATP-binding site is contributed by Thr-65–Thr-72.

Belongs to the formate--tetrahydrofolate ligase family.

It catalyses the reaction (6S)-5,6,7,8-tetrahydrofolate + formate + ATP = (6R)-10-formyltetrahydrofolate + ADP + phosphate. The protein operates within one-carbon metabolism; tetrahydrofolate interconversion. This chain is Formate--tetrahydrofolate ligase, found in Syntrophus aciditrophicus (strain SB).